The sequence spans 1021 residues: Disease resistance protein Pikm2-TS (1021 aa).

Positions methionine 1–valine 182 are structured coiled coil (CC) domain. The NB-ARC domain maps to threonine 186–lysine 519. Residues proline 297 to aspartate 317 are disordered. LRR repeat units lie at residues leucine 612–tyrosine 634, methionine 659–leucine 682, and glutamate 683–leucine 705. The segment at arginine 719–leucine 751 is disordered. LRR repeat units follow at residues leucine 785–glutamine 807, serine 817–alanine 841, proline 843–isoleucine 865, threonine 866–isoleucine 888, lysine 912–serine 935, and methionine 957–asparagine 981.

The protein belongs to the disease resistance NB-LRR family. Constitutively expressed.

In terms of biological role, disease resistance (R) protein. Resistance proteins guard the plant against pathogens that contain an appropriate avirulence protein via an indirect interaction with this avirulence protein. That triggers a defense system including the hypersensitive response, which restricts the pathogen growth. Contribution of Pikm-1 is required to recognize the effector avirulence protein AVR-Pik. This chain is Disease resistance protein Pikm2-TS, found in Oryza sativa subsp. japonica (Rice).